Here is a 212-residue protein sequence, read N- to C-terminus: Probable transaldolase (212 aa).

Residue K84 is the Schiff-base intermediate with substrate of the active site.

The protein belongs to the transaldolase family. Type 3B subfamily.

It is found in the cytoplasm. The catalysed reaction is D-sedoheptulose 7-phosphate + D-glyceraldehyde 3-phosphate = D-erythrose 4-phosphate + beta-D-fructose 6-phosphate. Its pathway is carbohydrate degradation; pentose phosphate pathway; D-glyceraldehyde 3-phosphate and beta-D-fructose 6-phosphate from D-ribose 5-phosphate and D-xylulose 5-phosphate (non-oxidative stage): step 2/3. Its function is as follows. Transaldolase is important for the balance of metabolites in the pentose-phosphate pathway. The polypeptide is Probable transaldolase (Bacillus pumilus (strain SAFR-032)).